Reading from the N-terminus, the 304-residue chain is UDP-3-O-acyl-N-acetylglucosamine deacetylase (304 aa).

Residues H79, H238, and D242 each coordinate Zn(2+). H265 acts as the Proton donor in catalysis.

The protein belongs to the LpxC family. The cofactor is Zn(2+).

It catalyses the reaction a UDP-3-O-[(3R)-3-hydroxyacyl]-N-acetyl-alpha-D-glucosamine + H2O = a UDP-3-O-[(3R)-3-hydroxyacyl]-alpha-D-glucosamine + acetate. It participates in glycolipid biosynthesis; lipid IV(A) biosynthesis; lipid IV(A) from (3R)-3-hydroxytetradecanoyl-[acyl-carrier-protein] and UDP-N-acetyl-alpha-D-glucosamine: step 2/6. In terms of biological role, catalyzes the hydrolysis of UDP-3-O-myristoyl-N-acetylglucosamine to form UDP-3-O-myristoylglucosamine and acetate, the committed step in lipid A biosynthesis. In Laribacter hongkongensis (strain HLHK9), this protein is UDP-3-O-acyl-N-acetylglucosamine deacetylase.